The sequence spans 434 residues: ATP-dependent protease ATPase subunit HslU (434 aa).

Residues Ile-18, 60-65 (GVGKTE), Asp-247, Glu-312, and Arg-384 each bind ATP.

It belongs to the ClpX chaperone family. HslU subfamily. In terms of assembly, a double ring-shaped homohexamer of HslV is capped on each side by a ring-shaped HslU homohexamer. The assembly of the HslU/HslV complex is dependent on binding of ATP.

Its subcellular location is the cytoplasm. Functionally, ATPase subunit of a proteasome-like degradation complex; this subunit has chaperone activity. The binding of ATP and its subsequent hydrolysis by HslU are essential for unfolding of protein substrates subsequently hydrolyzed by HslV. HslU recognizes the N-terminal part of its protein substrates and unfolds these before they are guided to HslV for hydrolysis. The polypeptide is ATP-dependent protease ATPase subunit HslU (Sinorhizobium fredii (strain NBRC 101917 / NGR234)).